The sequence spans 522 residues: ATP synthase subunit alpha (522 aa).

Residue 176-183 (GDRQTGKT) participates in ATP binding.

The protein belongs to the ATPase alpha/beta chains family. In terms of assembly, F-type ATPases have 2 components, CF(1) - the catalytic core - and CF(0) - the membrane proton channel. CF(1) has five subunits: alpha(3), beta(3), gamma(1), delta(1), epsilon(1). CF(0) has four main subunits: a, b, b' and c.

It is found in the cell membrane. The enzyme catalyses ATP + H2O + 4 H(+)(in) = ADP + phosphate + 5 H(+)(out). In terms of biological role, produces ATP from ADP in the presence of a proton gradient across the membrane. The alpha chain is a regulatory subunit. The sequence is that of ATP synthase subunit alpha from Chloroflexus aggregans (strain MD-66 / DSM 9485).